The chain runs to 430 residues: Elongation factor 1-gamma (430 aa).

In terms of domain architecture, GST N-terminal spans 2 to 84 (VAGKLYTYPE…YVANETLRGS (83 aa)). Positions 85 to 213 (SDLEKAQIIQ…FKLCEKAGEF (129 aa)) constitute a GST C-terminal domain. Composition is skewed to basic and acidic residues over residues 232 to 255 (KTEK…KEQE) and 269 to 278 (PKSKDPFDEM). Positions 232 to 278 (KTEKAPKAVKAKPEKKEVPKKEQEEPADAAEEALAAEPKSKDPFDEM) are disordered. In terms of domain architecture, EF-1-gamma C-terminal spans 271–430 (SKDPFDEMPK…RKFNQGKIFK (160 aa)).

As to quaternary structure, EF-1 is composed of four subunits: alpha, beta, delta, and gamma.

Probably plays a role in anchoring the complex to other cellular components. This Artemia salina (Brine shrimp) protein is Elongation factor 1-gamma.